A 162-amino-acid chain; its full sequence is Phosphopantetheine adenylyltransferase (162 aa).

Residue serine 11 coordinates substrate. ATP contacts are provided by residues 11 to 12 and histidine 19; that span reads SF. Substrate is bound by residues lysine 43, valine 76, and arginine 90. ATP-binding positions include 91–93, glutamate 101, and 126–132; these read GLR and HLYISSS.

Belongs to the bacterial CoaD family. In terms of assembly, homohexamer. The cofactor is Mg(2+).

The protein resides in the cytoplasm. It catalyses the reaction (R)-4'-phosphopantetheine + ATP + H(+) = 3'-dephospho-CoA + diphosphate. Its pathway is cofactor biosynthesis; coenzyme A biosynthesis; CoA from (R)-pantothenate: step 4/5. Functionally, reversibly transfers an adenylyl group from ATP to 4'-phosphopantetheine, yielding dephospho-CoA (dPCoA) and pyrophosphate. The polypeptide is Phosphopantetheine adenylyltransferase (Streptococcus pneumoniae (strain ATCC 700669 / Spain 23F-1)).